The following is a 427-amino-acid chain: Homeobox protein knotted-1-like 3 (427 aa).

2 disordered regions span residues 19 to 49 and 272 to 291; these read QTHHQHQQYQSDQPDPNSKPPEPHHSFQPAP and TGVSPGEGTSATMSDDEDDQ. The segment covering 272-284 has biased composition (polar residues); that stretch reads TGVSPGEGTSATM. The ELK domain maps to 330 to 350; the sequence is ELKHELKQGYKEKIVDIREEI. The homeobox; TALE-type DNA-binding region spans 351 to 414; sequence LRKRRAGKLP…NQRKRNWHSN (64 aa).

It belongs to the TALE/KNOX homeobox family. Maximally expressed in sepals, petals and fully expanded leaves. Also expressed in other flower organs and in developing leaves. Low level expression in stem internodes.

The protein resides in the nucleus. This Malus domestica (Apple) protein is Homeobox protein knotted-1-like 3.